Reading from the N-terminus, the 7260-residue chain is Nonribosomal peptide synthetase ecdA (7260 aa).

Residues 4-80 (TNEMERKRVF…ELFETIQYLQ (77 aa)) enclose the Carrier 1 domain. O-(pantetheine 4'-phosphoryl)serine is present on serine 41. The segment at 134 to 549 (EDVYPSTPLQ…SINEILTLPA (416 aa)) is condensation 1. The interval 575–965 (QDQVRSQPAA…DGSLLYVGRC (391 aa)) is adenylation 1. One can recognise a Carrier 2 domain in the interval 1090-1166 (APSTAIEHKL…DLARELEGRN (77 aa)). Serine 1127 carries the O-(pantetheine 4'-phosphoryl)serine modification. The segment at 1208 to 1628 (EDIIPCTAMQ…LGDLSLLSAD (421 aa)) is condensation 2. Residues 1653 to 2054 (EEQITARPDS…GRRDTQIKIR (402 aa)) are adenylation 2. Residues 2188–2264 (TPSTPTESQL…DLANLLSSRF (77 aa)) enclose the Carrier 3 domain. Serine 2225 carries the post-translational modification O-(pantetheine 4'-phosphoryl)serine. Positions 2314–2719 (QDVYPCTPLQ…THVVQQLCDP (406 aa)) are condensation 3. An adenylation 3 region spans residues 2763–3156 (KQALAQPNAP…GRRDTQVKIR (394 aa)). The 79-residue stretch at 3287 to 3365 (QPATEMEKML…ELAQVLEERV (79 aa)) folds into the Carrier 4 domain. The residue at position 3324 (serine 3324) is an O-(pantetheine 4'-phosphoryl)serine. Residues 3417–3831 (VQDVYPCTPL…LLSPNDQQQI (415 aa)) are condensation 4. The tract at residues 3851-4248 (EEQAMAHPTK…SFVYVARRNT (398 aa)) is adenylation 4. In terms of domain architecture, Carrier 5 spans 4394–4471 (APATAMERTL…DLANLLADGA (78 aa)). Serine 4431 carries the post-translational modification O-(pantetheine 4'-phosphoryl)serine. The interval 4510–4910 (EDIYPATPLQ…HFVHVAEQLF (401 aa)) is condensation 5. Positions 4955–5357 (ERAALQPNAP…GRRDLQVKIR (403 aa)) are adenylation 5. In terms of domain architecture, Carrier 6 spans 5496–5573 (APRTVMEQQV…DLALVLSERG (78 aa)). Serine 5533 is subject to O-(pantetheine 4'-phosphoryl)serine. The segment at 5622–6043 (EDVYPCTPLQ…AVSEKDERQI (422 aa)) is condensation 6. The interval 6063-6460 (QEQVARTPGE…GRHDSQVKIR (398 aa)) is adenylation 6. In terms of domain architecture, Carrier 7 spans 6592-6668 (APSTAMERQL…EVAQVVEDRV (77 aa)). Serine 6629 is modified (O-(pantetheine 4'-phosphoryl)serine). A condensation 7 region spans residues 6718 to 7133 (LPTTDFQALT…ILDSPGLLVS (416 aa)). The interval 7241-7260 (CEEAEKSASVTSSERRLATI) is disordered.

It belongs to the NRP synthetase family.

It functions in the pathway antifungal biosynthesis. In terms of biological role, nonribosomal peptide synthetase; part of the gene cluster that mediates the biosynthesis of echinocandin B, a fungal lipidated cyclic hexapeptide that acts as an antifungal agent. Linoleoyl-AMP, produced by the fatty-acyl-AMP ligase ecdI, is transferred to the initiation carrier domain (T0) of ecdA. The linoleoyl-S-phosphopantetheinyl-T0 is sequentially extended with L-ornithine, L-threonine, L-proline, L-homotyrosine, L-threonine, and 4R-methyl-L-proline to form the linear hexapeptide. Thereafter, the terminal condensation (C7) performs macrocyclization of the NRPS product and the cyclic scaffold is released from ecdA. All six of the amino acid residues are hydroxylated, including 4R,5R-dihydroxy-L-ornithine, 4R-hydroxyl-L-proline, 3S,4S-dihydroxy-L-homotyrosine, and 3S-hydroxyl-4S-methyl-L-prolin. In the pathway, all the hydroxylation reactions are proposed to occur following completion of the cyclic peptide, so the unhydroxylated precursor produced by ecdA will undergo six rounds of hydroxylation. Five hydroxylase genes (ecdG, ecdH, ecdK, htyE and htyF) are embedded within the echinocandin B (ecd) and L-homotyrosine (hty) clusters. This Aspergillus rugulosus (Emericella rugulosa) protein is Nonribosomal peptide synthetase ecdA.